A 188-amino-acid chain; its full sequence is ATP synthase subunit b (188 aa).

The chain crosses the membrane as a helical span at residues 19 to 39; that stretch reads LPAVYDIVWSAVVFVVLLVVI.

The protein belongs to the ATPase B chain family. F-type ATPases have 2 components, F(1) - the catalytic core - and F(0) - the membrane proton channel. F(1) has five subunits: alpha(3), beta(3), gamma(1), delta(1), epsilon(1). F(0) has three main subunits: a(1), b(2) and c(10-14). The alpha and beta chains form an alternating ring which encloses part of the gamma chain. F(1) is attached to F(0) by a central stalk formed by the gamma and epsilon chains, while a peripheral stalk is formed by the delta and b chains.

Its subcellular location is the cell membrane. F(1)F(0) ATP synthase produces ATP from ADP in the presence of a proton or sodium gradient. F-type ATPases consist of two structural domains, F(1) containing the extramembraneous catalytic core and F(0) containing the membrane proton channel, linked together by a central stalk and a peripheral stalk. During catalysis, ATP synthesis in the catalytic domain of F(1) is coupled via a rotary mechanism of the central stalk subunits to proton translocation. Functionally, component of the F(0) channel, it forms part of the peripheral stalk, linking F(1) to F(0). The protein is ATP synthase subunit b of Clavibacter michiganensis subsp. michiganensis (strain NCPPB 382).